We begin with the raw amino-acid sequence, 390 residues long: Dual-specificity RNA methyltransferase RlmN (390 aa).

The Proton acceptor role is filled by Glu-110. One can recognise a Radical SAM core domain in the interval 116 to 355 (EADRATLCVS…VIIRKTRGDD (240 aa)). A disulfide bond links Cys-123 and Cys-360. [4Fe-4S] cluster contacts are provided by Cys-130, Cys-134, and Cys-137. S-adenosyl-L-methionine contacts are provided by residues 184 to 185 (GE), Ser-216, 238 to 240 (SLH), and Asn-317. Cys-360 serves as the catalytic S-methylcysteine intermediate.

Belongs to the radical SAM superfamily. RlmN family. [4Fe-4S] cluster is required as a cofactor.

It localises to the cytoplasm. It catalyses the reaction adenosine(2503) in 23S rRNA + 2 reduced [2Fe-2S]-[ferredoxin] + 2 S-adenosyl-L-methionine = 2-methyladenosine(2503) in 23S rRNA + 5'-deoxyadenosine + L-methionine + 2 oxidized [2Fe-2S]-[ferredoxin] + S-adenosyl-L-homocysteine. It carries out the reaction adenosine(37) in tRNA + 2 reduced [2Fe-2S]-[ferredoxin] + 2 S-adenosyl-L-methionine = 2-methyladenosine(37) in tRNA + 5'-deoxyadenosine + L-methionine + 2 oxidized [2Fe-2S]-[ferredoxin] + S-adenosyl-L-homocysteine. Specifically methylates position 2 of adenine 2503 in 23S rRNA and position 2 of adenine 37 in tRNAs. m2A2503 modification seems to play a crucial role in the proofreading step occurring at the peptidyl transferase center and thus would serve to optimize ribosomal fidelity. This chain is Dual-specificity RNA methyltransferase RlmN, found in Haemophilus influenzae (strain ATCC 51907 / DSM 11121 / KW20 / Rd).